A 954-amino-acid chain; its full sequence is Protein translocase subunit SecA (954 aa).

ATP contacts are provided by residues Gln-86, 104–108, and Asp-494; that span reads GEGKT. The segment at 520 to 549 is disordered; that stretch reads LDPDNPLGSASTTSRGGGQGFGPASPKPKK.

The protein belongs to the SecA family. Monomer and homodimer. Part of the essential Sec protein translocation apparatus which comprises SecA, SecYEG and auxiliary proteins SecDF. Other proteins may also be involved.

The protein localises to the cell inner membrane. It is found in the cellular thylakoid membrane. It localises to the cytoplasm. The catalysed reaction is ATP + H2O + cellular proteinSide 1 = ADP + phosphate + cellular proteinSide 2.. In terms of biological role, part of the Sec protein translocase complex. Interacts with the SecYEG preprotein conducting channel. Has a central role in coupling the hydrolysis of ATP to the transfer of proteins into and across the cell membrane, serving as an ATP-driven molecular motor driving the stepwise translocation of polypeptide chains across the membrane. Probably participates in protein translocation into and across both the cytoplasmic and thylakoid membranes in cyanobacterial cells. The protein is Protein translocase subunit SecA of Synechococcus sp. (strain JA-3-3Ab) (Cyanobacteria bacterium Yellowstone A-Prime).